Reading from the N-terminus, the 184-residue chain is Ubiquitin-conjugating enzyme E2-23 kDa (184 aa).

The region spanning 1 to 148 (MSSPSKRREM…VKEYCERYAK (148 aa)) is the UBC core domain. Cys-85 (glycyl thioester intermediate) is an active-site residue. The segment at 146–184 (YAKPEDISPEEEEEESDEELSDAEGYDSGDEAIMGHADP) is disordered. Over residues 152–175 (ISPEEEEEESDEELSDAEGYDSGD) the composition is skewed to acidic residues.

The protein belongs to the ubiquitin-conjugating enzyme family.

The enzyme catalyses S-ubiquitinyl-[E1 ubiquitin-activating enzyme]-L-cysteine + [E2 ubiquitin-conjugating enzyme]-L-cysteine = [E1 ubiquitin-activating enzyme]-L-cysteine + S-ubiquitinyl-[E2 ubiquitin-conjugating enzyme]-L-cysteine.. It functions in the pathway protein modification; protein ubiquitination. In terms of biological role, catalyzes the covalent attachment of ubiquitin to other proteins. The protein is Ubiquitin-conjugating enzyme E2-23 kDa (UBC4) of Triticum aestivum (Wheat).